Consider the following 639-residue polypeptide: Protein argonaute (639 aa).

Residues 1–100 (MYLNLYKIDI…YIKKLFLDND (100 aa)) form an N-terminal domain region. Residues 101–153 (FYFKKGNNFISNSEVFSLDSNENVNAHLTYKIKIHNISNEYYLSILPKFTFLS) are linker L1. Residues 154 to 209 (KEPALESAIKSGYLYNIKSGKSFPYISGLDGILKIDIGNNQIVEVAYPENYLFNFT) are PAZ domain. Positions 210–292 (TRDAEKYGFS…KYSFYKNEQP (83 aa)) are linker L2. The segment at 293–424 (LKAIFFFSSK…YVYKMGNFIP (132 aa)) is mid domain. Residues 425-639 (ECKPFILKKM…DYEWKLYIPY (215 aa)) are PIWI domain. Active-site residues include aspartate 446, glutamate 482, aspartate 516, and asparagine 624. Aspartate 446 is a binding site for Mn(2+). Aspartate 516 and asparagine 624 together coordinate Mn(2+).

This sequence belongs to the argonaute family. Long pAgo subfamily. Mn(2+) is required as a cofactor.

It localises to the cytoplasm. An RNA-guided ssDNA endonuclease that may play a role in defense against invading mobile genetic elements. Uses short 5'-OH-ssRNA sequences as guides (gRNA) to bind complementary target DNA (tDNA) or target RNA resulting in target cleavage. The cleavage site is 10 nucleotides (nt) downstream of the target residue base-paired with the 5'-end of the gRNA. Reaction rates are fastest on 5'-OH-gRNA:tDNA followed by 5'-OH-gRNA:target RNA. gRNA between 17-21 nt supports equivalent rates of cleavage, has no preferred 5'-nt. Has weak activity on tDNA with 5'-phospho-gRNA, yielding products 1-2 nt longer. Unlike other characterized prokaryotic Ago proteins symmetric mismatches centered around the cleavage site reduce cleavage efficiency. The chain is Protein argonaute from Marinitoga piezophila (strain DSM 14283 / JCM 11233 / KA3).